The sequence spans 452 residues: Netrin-5 (452 aa).

Positions 1-34 (MTDYRTLFSSPGAGSTVTTPITLSLLLLLSQATS) are cleaved as a signal peptide. Intrachain disulfides connect Cys-173–Cys-182, Cys-175–Cys-191, Cys-193–Cys-202, Cys-205–Cys-225, Cys-228–Cys-240, Cys-230–Cys-247, Cys-249–Cys-258, Cys-261–Cys-275, Cys-298–Cys-376, Cys-302–Cys-378, and Cys-317–Cys-438. Laminin EGF-like domains lie at 173-227 (CQCH…PCLP) and 228-277 (CQCH…PCQR). Residues 298–438 (CQGYCNVSVS…LQQKERGGAC (141 aa)) enclose the NTR domain. Asn-303 carries an N-linked (GlcNAc...) asparagine glycan.

Its subcellular location is the secreted. Functionally, plays a role in neurogenesis. Prevents motor neuron cell body migration out of the neural tube. The polypeptide is Netrin-5 (Ntn5) (Mus musculus (Mouse)).